A 445-amino-acid chain; its full sequence is Histidinol dehydrogenase (445 aa).

3 residues coordinate NAD(+): Y130, Q192, and N215. The substrate site is built by S238, Q260, and H263. Residues Q260 and H263 each coordinate Zn(2+). Active-site proton acceptor residues include E328 and H329. Substrate is bound by residues H329, D362, E416, and H421. Position 362 (D362) interacts with Zn(2+). Residue H421 coordinates Zn(2+).

It belongs to the histidinol dehydrogenase family. It depends on Zn(2+) as a cofactor.

The enzyme catalyses L-histidinol + 2 NAD(+) + H2O = L-histidine + 2 NADH + 3 H(+). Its pathway is amino-acid biosynthesis; L-histidine biosynthesis; L-histidine from 5-phospho-alpha-D-ribose 1-diphosphate: step 9/9. Functionally, catalyzes the sequential NAD-dependent oxidations of L-histidinol to L-histidinaldehyde and then to L-histidine. In Gloeobacter violaceus (strain ATCC 29082 / PCC 7421), this protein is Histidinol dehydrogenase.